The chain runs to 211 residues: MGGKLIVFEGVEGCGKTSQMQLCSQWLESLGVSVVVTREPGGTELGLHLRRLLLEKAEDKPVAEVTELLLYAADRSQHVEQELKPNLAAGKYILCDRYTDSTIAYQGYGRGLNMSLINQLNYIATAGLESDLTIWLDIDVEVGLTRKRGDGIALDRIEQETIAFHRRVQQGYAELAASYPSRIVRVDGSLSKEAVQQVIQEILRVHLKGLP.

10 to 17 provides a ligand contact to ATP; that stretch reads GVEGCGKT.

This sequence belongs to the thymidylate kinase family.

It catalyses the reaction dTMP + ATP = dTDP + ADP. Phosphorylation of dTMP to form dTDP in both de novo and salvage pathways of dTTP synthesis. The chain is Thymidylate kinase from Nostoc punctiforme (strain ATCC 29133 / PCC 73102).